The primary structure comprises 415 residues: Serine--tRNA ligase (415 aa).

An L-serine-binding site is contributed by 231–233 (TAE). ATP is bound at residue 262-264 (RSE). Glu285 contacts L-serine. 349–352 (EISS) contacts ATP. L-serine is bound at residue Ser383.

This sequence belongs to the class-II aminoacyl-tRNA synthetase family. Type-1 seryl-tRNA synthetase subfamily. Homodimer. The tRNA molecule binds across the dimer.

The protein localises to the cytoplasm. The catalysed reaction is tRNA(Ser) + L-serine + ATP = L-seryl-tRNA(Ser) + AMP + diphosphate + H(+). The enzyme catalyses tRNA(Sec) + L-serine + ATP = L-seryl-tRNA(Sec) + AMP + diphosphate + H(+). Its pathway is aminoacyl-tRNA biosynthesis; selenocysteinyl-tRNA(Sec) biosynthesis; L-seryl-tRNA(Sec) from L-serine and tRNA(Sec): step 1/1. In terms of biological role, catalyzes the attachment of serine to tRNA(Ser). Is also able to aminoacylate tRNA(Sec) with serine, to form the misacylated tRNA L-seryl-tRNA(Sec), which will be further converted into selenocysteinyl-tRNA(Sec). This chain is Serine--tRNA ligase, found in Helicobacter pylori (strain Shi470).